The chain runs to 152 residues: Heavy metal-associated isoprenylated plant protein 20 (152 aa).

In terms of domain architecture, HMA spans 27–90 (MQTVNIKVKM…RIERTGKKAE (64 aa)). Residues C38 and C41 each coordinate Cd(2+). Cysteine methyl ester is present on C149. C149 is lipidated: S-farnesyl cysteine. Residues 150–152 (TVM) constitute a propeptide, removed in mature form.

Belongs to the HIPP family. As to quaternary structure, interacts with ZHD11/HB29. As to expression, expressed in roots, shoot apical meristem, leaves and flowers.

It is found in the membrane. Its function is as follows. Heavy-metal-binding protein. Binds cadmium. May be involved in cadmium transport and play a role in cadmium detoxification. The chain is Heavy metal-associated isoprenylated plant protein 20 from Arabidopsis thaliana (Mouse-ear cress).